A 160-amino-acid polypeptide reads, in one-letter code: Transcriptional regulator MraZ (160 aa).

SpoVT-AbrB domains lie at N5–Y50 and A93–E136.

Belongs to the MraZ family. Forms oligomers.

The protein resides in the cytoplasm. Its subcellular location is the nucleoid. In Geotalea daltonii (strain DSM 22248 / JCM 15807 / FRC-32) (Geobacter daltonii), this protein is Transcriptional regulator MraZ.